The sequence spans 439 residues: Serine--tRNA ligase (439 aa).

247-249 (TSE) lines the L-serine pocket. Residue 278-280 (RSE) participates in ATP binding. E301 is a binding site for L-serine. An ATP-binding site is contributed by 365–368 (EISS). An L-serine-binding site is contributed by S400.

It belongs to the class-II aminoacyl-tRNA synthetase family. Type-1 seryl-tRNA synthetase subfamily. As to quaternary structure, homodimer. The tRNA molecule binds across the dimer.

Its subcellular location is the cytoplasm. It carries out the reaction tRNA(Ser) + L-serine + ATP = L-seryl-tRNA(Ser) + AMP + diphosphate + H(+). The enzyme catalyses tRNA(Sec) + L-serine + ATP = L-seryl-tRNA(Sec) + AMP + diphosphate + H(+). The protein operates within aminoacyl-tRNA biosynthesis; selenocysteinyl-tRNA(Sec) biosynthesis; L-seryl-tRNA(Sec) from L-serine and tRNA(Sec): step 1/1. Its function is as follows. Catalyzes the attachment of serine to tRNA(Ser). Is also able to aminoacylate tRNA(Sec) with serine, to form the misacylated tRNA L-seryl-tRNA(Sec), which will be further converted into selenocysteinyl-tRNA(Sec). The chain is Serine--tRNA ligase from Paracidovorax citrulli (strain AAC00-1) (Acidovorax citrulli).